Reading from the N-terminus, the 235-residue chain is MVEEIMKSEEQKLIDVNKHRGVRSDGEEDEQLEEGEIVGGDADTLSSSSSSRPGTAIAQHPLEHSWTFWFDTPSAKSKQVAWGSSMRPIYTFSSVEEFWSLYNNIHRPSKLAQGADFYCFKNKIEPKWEDPVCANGGKWTMTFTKAKSDTCWLYTLLAMIGEQFDHGDDICGAVVNVRARQEKIALWTKNAANESAQLSIGKQWKEFIDYNDTIGFIFHEDAKTLDRSAKNKYTV.

The segment covering 16 to 25 (VNKHRGVRSD) has biased composition (basic and acidic residues). The interval 16–56 (VNKHRGVRSDGEEDEQLEEGEIVGGDADTLSSSSSSRPGTA) is disordered. Over residues 26–36 (GEEDEQLEEGE) the composition is skewed to acidic residues. 2 EIF4G-binding regions span residues 60–63 (HPLE) and 70–106 (FDTPSAKSKQVAWGSSMRPIYTFSSVEEFWSLYNNIH). MRNA-binding positions include 78 to 83 (KQVAWG), Lys110, and 128 to 129 (WE). Cys133 and Cys171 are joined by a disulfide. The EIF4G-binding stretch occupies residues 154-163 (YTLLAMIGEQ). MRNA contacts are provided by residues 178–183 (RARQEK) and 223–227 (KTLDR).

This sequence belongs to the eukaryotic initiation factor 4E family. EIF4F is a multi-subunit complex, the composition of which varies with external and internal environmental conditions. It is composed of at least EIF4A, EIF4E and EIF4G. EIF4E is also known to interact with other partners. In higher plants two isoforms of EIF4F have been identified, named isoform EIF4F and isoform EIF(iso)4F. Isoform EIF4F has subunits p220 and p26, whereas isoform EIF(iso)4F has subunits p82 and p28. In terms of assembly, (Microbial infection) Interacts with potyvirus viral genome-linked protein (VPg); this interaction is possible in susceptible hosts but impaired in resistant plants. According to the redox status, the Cys-133-Cys-171 disulfide bridge may have a role in regulating protein function by affecting its ability to bind capped mRNA.

It is found in the nucleus. The protein resides in the cytoplasm. Its function is as follows. Component of the protein complex eIF4F, which is involved in the recognition of the mRNA cap, ATP-dependent unwinding of 5'-terminal secondary structure and recruitment of mRNA to the ribosome. Recognizes and binds the 7-methylguanosine-containing mRNA cap during an early step in the initiation of protein synthesis and facilitates ribosome binding by inducing the unwinding of the mRNAs secondary structures. Key component of recessive resistance to potyviruses. In terms of biological role, (Microbial infection) Susceptibility host factor required for viral infection by recruiting viral RNAs to the host ribosomal complex via an interaction with viral genome-linked protein (VPg). This chain is Eukaryotic translation initiation factor 4E-1, found in Lactuca sativa (Garden lettuce).